We begin with the raw amino-acid sequence, 280 residues long: Small ribosomal subunit protein uS15m (280 aa).

This sequence belongs to the universal ribosomal protein uS15 family. As to quaternary structure, component of the mitochondrial ribosome small subunit (28S) which comprises a 12S rRNA and about 30 distinct proteins. As to expression, expressed in anterior and posterior midgut primordia in stage 11 embryos. In stage 13 embryos, expression is high in the developing midgut and hindgut. In stage 16 embryos, expression is elevated in the midgut, hindgut, and in a small region that will give rise to pharyngeal muscles and to the stomatogastric nervous system. In larvae, expression is predominant in the gut, and head, presumably in pharyngeal muscles.

Its subcellular location is the mitochondrion. In terms of biological role, essential for gut mitochondrial activity. Might be involved in tissue specific growth factor production. This Drosophila melanogaster (Fruit fly) protein is Small ribosomal subunit protein uS15m (bonsai).